Consider the following 213-residue polypeptide: Peptide methionine sulfoxide reductase MsrA (213 aa).

The active site involves cysteine 52.

Belongs to the MsrA Met sulfoxide reductase family.

It catalyses the reaction L-methionyl-[protein] + [thioredoxin]-disulfide + H2O = L-methionyl-(S)-S-oxide-[protein] + [thioredoxin]-dithiol. It carries out the reaction [thioredoxin]-disulfide + L-methionine + H2O = L-methionine (S)-S-oxide + [thioredoxin]-dithiol. In terms of biological role, has an important function as a repair enzyme for proteins that have been inactivated by oxidation. Catalyzes the reversible oxidation-reduction of methionine sulfoxide in proteins to methionine. This chain is Peptide methionine sulfoxide reductase MsrA, found in Enterobacter sp. (strain 638).